We begin with the raw amino-acid sequence, 89 residues long: Small ribosomal subunit protein uS14 (89 aa).

Belongs to the universal ribosomal protein uS14 family. In terms of assembly, part of the 30S ribosomal subunit. Contacts proteins S3 and S10.

Functionally, binds 16S rRNA, required for the assembly of 30S particles and may also be responsible for determining the conformation of the 16S rRNA at the A site. This chain is Small ribosomal subunit protein uS14, found in Deinococcus radiodurans (strain ATCC 13939 / DSM 20539 / JCM 16871 / CCUG 27074 / LMG 4051 / NBRC 15346 / NCIMB 9279 / VKM B-1422 / R1).